Reading from the N-terminus, the 119-residue chain is Large ribosomal subunit protein uL18 (119 aa).

This sequence belongs to the universal ribosomal protein uL18 family. Part of the 50S ribosomal subunit; part of the 5S rRNA/L5/L18/L25 subcomplex. Contacts the 5S and 23S rRNAs.

In terms of biological role, this is one of the proteins that bind and probably mediate the attachment of the 5S RNA into the large ribosomal subunit, where it forms part of the central protuberance. This is Large ribosomal subunit protein uL18 from Xanthomonas oryzae pv. oryzae (strain PXO99A).